A 983-amino-acid polypeptide reads, in one-letter code: Anion exchange protein 4 (983 aa).

The tract at residues Met-1–Leu-48 is disordered. The N-linked (GlcNAc...) asparagine glycan is linked to Asn-183. 2 disordered regions span residues Thr-186–Glu-205 and Arg-332–Ala-357. A run of 4 helical transmembrane segments spans residues Ala-415 to Gly-435, Gly-443 to Gly-463, Val-500 to Val-520, and Gly-530 to Leu-550. The membrane (anion exchange) stretch occupies residues Ala-415–Asn-983. N-linked (GlcNAc...) asparagine glycosylation is found at Asn-576 and Asn-600. A run of 7 helical transmembrane segments spans residues Val-624 to Ala-644, Phe-665 to Thr-685, Pro-712 to Met-732, Leu-758 to Ser-778, Gly-815 to Ile-835, Met-837 to Phe-857, and Leu-899 to Val-919. Basic and acidic residues predominate over residues Arg-946–His-957. Positions Arg-946–Asn-983 are disordered. Asn-979 carries N-linked (GlcNAc...) asparagine glycosylation.

The protein belongs to the anion exchanger (TC 2.A.31) family. As to expression, kidney specific.

The protein resides in the basolateral cell membrane. The enzyme catalyses 2 hydrogencarbonate(out) + chloride(in) + Na(+)(out) = 2 hydrogencarbonate(in) + chloride(out) + Na(+)(in). The catalysed reaction is K(+)(in) + 2 hydrogencarbonate(in) + chloride(out) = K(+)(out) + 2 hydrogencarbonate(out) + chloride(in). It carries out the reaction Li(+)(in) + 2 hydrogencarbonate(in) + chloride(out) = Li(+)(out) + 2 hydrogencarbonate(out) + chloride(in). It catalyses the reaction Rb(+)(in) + 2 hydrogencarbonate(in) + chloride(out) = Rb(+)(out) + 2 hydrogencarbonate(out) + chloride(in). The enzyme catalyses Cs(+)(in) + 2 hydrogencarbonate(in) + chloride(out) = Cs(+)(out) + 2 hydrogencarbonate(out) + chloride(in). Electroneutral Cl(-)/HCO3(-) antiporter that favors chloride ion entry and efflux of hydrogencarbonate and sodium ion across the basolateral membrane and may participate in salivary secretion. Also mediates Cl(-)/HCO3(-) exchange activity in the presence of K(+) as well as Cs(+), Li(+), and Rb(+). Does not contribute to Cl(-)/HCO3(-) exchanger in the apical membrane of the upper villous epithelium. This chain is Anion exchange protein 4, found in Homo sapiens (Human).